Here is a 140-residue protein sequence, read N- to C-terminus: MTIQYTFSMIKPDAIKRNKIGQINTYLENAGLKIVAQKMKYLTKYEAECFYDEHRARPFFNSLVEYITSGAVVLQVLKGTDAITLNRKIMGATNPDEAEAGTIRKDFGESIEANSIHGSDSQNSAKREIEFFFNKSEIIE.

ATP contacts are provided by Lys11, Phe59, Arg87, Thr93, Arg104, and Asn114. His117 functions as the Pros-phosphohistidine intermediate in the catalytic mechanism.

It belongs to the NDK family. Homotetramer. Mg(2+) serves as cofactor.

It is found in the cytoplasm. The catalysed reaction is a 2'-deoxyribonucleoside 5'-diphosphate + ATP = a 2'-deoxyribonucleoside 5'-triphosphate + ADP. The enzyme catalyses a ribonucleoside 5'-diphosphate + ATP = a ribonucleoside 5'-triphosphate + ADP. In terms of biological role, major role in the synthesis of nucleoside triphosphates other than ATP. The ATP gamma phosphate is transferred to the NDP beta phosphate via a ping-pong mechanism, using a phosphorylated active-site intermediate. The chain is Nucleoside diphosphate kinase from Rickettsia canadensis (strain McKiel).